Consider the following 623-residue polypeptide: MKTSLRRLRGVLHKHESKDRRDLRALVQKDELAQASQDVEDMRDCYDSLLNAAAATANSAYEFSESLRELGACLLEKTALNDDEESGRVLIMLGKLQFELQKLVDKYRSHIFQTITIPSESLLNELRIVEEMQRLCDEKRNVYEGMLTRQREKGRSKGGKGETFSPQQLQEAHDDYENETTLFVFRLKSLKQGQTRSLLTQAARHHAAQLCFFKKALSSLEEVDPHVQMVTESQHIDYHFSGLEDDDGDDEIENNENDGSEVHDDGELSFEYRVNDKDQDADSSAGGSSELGNSDITFPQIGGPYTAQENEEGNYRKSHSFRRDVRAVSQSAPLFPENRTTPPSEKLLRMRSTLTRKFNTYALPTPVETTRSPSSTTSPGHKNVGSSNPTKAITKQIWYSSPLETRGPAKVSSRSMVALKEQVLRESNKNTSRLPPPLADGLLFSRLGTLKRRSFSGPLTSKPLPNKPLSTTSHLYSGPIPRNPVSKLPKVSSSPTASPTFVSTPKISELHELPRPPPRSSTKSSRELGYSAPLVSRSQLLSKPLITNSASPLPIPPAITRSFSIPTSNLRASDLDMSKTSLGTKKLGTPSPPLTPMSLIHPPPQALPERADHLMMSKQERRI.

Positions 24-51 form a coiled coil; that stretch reads RALVQKDELAQASQDVEDMRDCYDSLLN. Disordered stretches follow at residues 148-170, 240-343, 362-393, 454-531, and 585-607; these read TRQR…QQLQ, FSGL…TTPP, ALPT…TKAI, SFSG…LGYS, and KKLG…PQAL. The segment covering 243–259 has biased composition (acidic residues); it reads LEDDDGDDEIENNENDG. Residues 328 to 343 are compositionally biased toward polar residues; that stretch reads VSQSAPLFPENRTTPP. Positions 364-379 are enriched in low complexity; it reads PTPVETTRSPSSTTSP. Over residues 384–393 the composition is skewed to polar residues; that stretch reads VGSSNPTKAI. Low complexity predominate over residues 484 to 495; that stretch reads PVSKLPKVSSSP. The span at 496–506 shows a compositional bias: polar residues; that stretch reads TASPTFVSTPK. Over residues 590–606 the composition is skewed to pro residues; it reads PSPPLTPMSLIHPPPQA.

This is an uncharacterized protein from Arabidopsis thaliana (Mouse-ear cress).